The primary structure comprises 373 residues: Probable tRNA sulfurtransferase (373 aa).

Positions 54 to 158 constitute a THUMP domain; it reads NKNIEELSKV…NDVAYFYHKI (105 aa). ATP-binding positions include 176 to 177, 201 to 202, Lys-256, Gly-278, and Gln-287; these read LF and NF.

It belongs to the ThiI family.

It is found in the cytoplasm. The enzyme catalyses [ThiI sulfur-carrier protein]-S-sulfanyl-L-cysteine + a uridine in tRNA + 2 reduced [2Fe-2S]-[ferredoxin] + ATP + H(+) = [ThiI sulfur-carrier protein]-L-cysteine + a 4-thiouridine in tRNA + 2 oxidized [2Fe-2S]-[ferredoxin] + AMP + diphosphate. It carries out the reaction [ThiS sulfur-carrier protein]-C-terminal Gly-Gly-AMP + S-sulfanyl-L-cysteinyl-[cysteine desulfurase] + AH2 = [ThiS sulfur-carrier protein]-C-terminal-Gly-aminoethanethioate + L-cysteinyl-[cysteine desulfurase] + A + AMP + 2 H(+). It functions in the pathway cofactor biosynthesis; thiamine diphosphate biosynthesis. Functionally, catalyzes the ATP-dependent transfer of a sulfur to tRNA to produce 4-thiouridine in position 8 of tRNAs, which functions as a near-UV photosensor. Also catalyzes the transfer of sulfur to the sulfur carrier protein ThiS, forming ThiS-thiocarboxylate. This is a step in the synthesis of thiazole, in the thiamine biosynthesis pathway. The sulfur is donated as persulfide by IscS. In Saccharolobus islandicus (strain M.16.4 / Kamchatka #3) (Sulfolobus islandicus), this protein is Probable tRNA sulfurtransferase.